The following is a 424-amino-acid chain: 5-methylthioadenosine/S-adenosylhomocysteine deaminase (424 aa).

Zn(2+)-binding residues include His60 and His62. Substrate is bound by residues Glu89 and His181. Position 208 (His208) interacts with Zn(2+). Residues Glu211 and Asp296 each coordinate substrate. Residue Asp296 participates in Zn(2+) binding.

The protein belongs to the metallo-dependent hydrolases superfamily. MTA/SAH deaminase family. The cofactor is Zn(2+).

It catalyses the reaction S-adenosyl-L-homocysteine + H2O + H(+) = S-inosyl-L-homocysteine + NH4(+). The catalysed reaction is S-methyl-5'-thioadenosine + H2O + H(+) = S-methyl-5'-thioinosine + NH4(+). Its function is as follows. Catalyzes the deamination of 5-methylthioadenosine and S-adenosyl-L-homocysteine into 5-methylthioinosine and S-inosyl-L-homocysteine, respectively. Is also able to deaminate adenosine. This Thermococcus sibiricus (strain DSM 12597 / MM 739) protein is 5-methylthioadenosine/S-adenosylhomocysteine deaminase.